We begin with the raw amino-acid sequence, 793 residues long: von Willebrand factor A domain-containing protein 5A (793 aa).

The VIT domain maps to 1–131; it reads MEHHCGLITS…KVAVTLRYVQ (131 aa). Positions 281–469 constitute a VWFA domain; it reads EFVFLMDRSG…FALQCAVDNI (189 aa). Tyrosine 622 is subject to Phosphotyrosine.

May play a role in tumorigenesis as a tumor suppressor. Altered expression of this protein and disruption of the molecular pathway it is involved in may contribute directly to or modify tumorigenesis. This is von Willebrand factor A domain-containing protein 5A (Vwa5a) from Mus musculus (Mouse).